Reading from the N-terminus, the 350-residue chain is Protein O-mannose kinase (350 aa).

The residue at position 1 (M1) is an N-acetylmethionine. The Cytoplasmic portion of the chain corresponds to 1 to 20 (MEKQPQNSRRGLAPREVPPA). Residues 21-43 (VGLLLIMALMNTLLYLCLDHFFI) form a helical; Signal-anchor for type II membrane protein membrane-spanning segment. Topologically, residues 44–350 (APRQSTVDPT…AMMSQAREML (307 aa)) are lumenal. One can recognise a Protein kinase domain in the interval 81 to 350 (VRQLKRVGEG…AMMSQAREML (270 aa)). N165, N220, and N235 each carry an N-linked (GlcNAc...) asparagine glycan.

This sequence belongs to the protein kinase superfamily. Ser/Thr protein kinase family. STKL subfamily. In terms of tissue distribution, highest expression is observed in brain, skeletal muscle, kidney and heart in fetal and adult tissues.

It localises to the endoplasmic reticulum membrane. The enzyme catalyses 3-O-[beta-D-GalNAc-(1-&gt;3)-beta-D-GlcNAc-(1-&gt;4)-alpha-D-Man]-L-Thr-[protein] + ATP = 3-O-[beta-D-GalNAc-(1-&gt;3)-beta-D-GlcNAc-(1-&gt;4)-(O-6-P-alpha-D-Man)]-Thr-[protein] + ADP + H(+). Its function is as follows. Protein O-mannose kinase that specifically mediates phosphorylation at the 6-position of an O-mannose of the trisaccharide (N-acetylgalactosamine (GalNAc)-beta-1,3-N-acetylglucosamine (GlcNAc)-beta-1,4-mannose) to generate phosphorylated O-mannosyl trisaccharide (N-acetylgalactosamine-beta-1,3-N-acetylglucosamine-beta-1,4-(phosphate-6-)mannose). Phosphorylated O-mannosyl trisaccharide is a carbohydrate structure present in alpha-dystroglycan (DAG1), which is required for binding laminin G-like domain-containing extracellular proteins with high affinity. Only shows kinase activity when the GalNAc-beta-3-GlcNAc-beta-terminus is linked to the 4-position of O-mannose, suggesting that this disaccharide serves as the substrate recognition motif. This Homo sapiens (Human) protein is Protein O-mannose kinase (POMK).